An 82-amino-acid polypeptide reads, in one-letter code: ATP synthase subunit c, chloroplastic (82 aa).

2 consecutive transmembrane segments (helical) span residues 3-23 and 57-77; these read PLIS…ASIG and FAFM…LLFA.

This sequence belongs to the ATPase C chain family. F-type ATPases have 2 components, F(1) - the catalytic core - and F(0) - the membrane proton channel. F(1) has five subunits: alpha(3), beta(3), gamma(1), delta(1), epsilon(1). F(0) has four main subunits: a(1), b(1), b'(1) and c(10-14). The alpha and beta chains form an alternating ring which encloses part of the gamma chain. F(1) is attached to F(0) by a central stalk formed by the gamma and epsilon chains, while a peripheral stalk is formed by the delta, b and b' chains.

The protein localises to the plastid. It localises to the chloroplast thylakoid membrane. Its function is as follows. F(1)F(0) ATP synthase produces ATP from ADP in the presence of a proton or sodium gradient. F-type ATPases consist of two structural domains, F(1) containing the extramembraneous catalytic core and F(0) containing the membrane proton channel, linked together by a central stalk and a peripheral stalk. During catalysis, ATP synthesis in the catalytic domain of F(1) is coupled via a rotary mechanism of the central stalk subunits to proton translocation. Key component of the F(0) channel; it plays a direct role in translocation across the membrane. A homomeric c-ring of between 10-14 subunits forms the central stalk rotor element with the F(1) delta and epsilon subunits. The protein is ATP synthase subunit c, chloroplastic of Mesostigma viride (Green alga).